The following is a 417-amino-acid chain: NADH-quinone oxidoreductase subunit D (417 aa).

Belongs to the complex I 49 kDa subunit family. As to quaternary structure, NDH-1 is composed of 14 different subunits. Subunits NuoB, C, D, E, F, and G constitute the peripheral sector of the complex.

It is found in the cell inner membrane. The catalysed reaction is a quinone + NADH + 5 H(+)(in) = a quinol + NAD(+) + 4 H(+)(out). NDH-1 shuttles electrons from NADH, via FMN and iron-sulfur (Fe-S) centers, to quinones in the respiratory chain. The immediate electron acceptor for the enzyme in this species is believed to be ubiquinone. Couples the redox reaction to proton translocation (for every two electrons transferred, four hydrogen ions are translocated across the cytoplasmic membrane), and thus conserves the redox energy in a proton gradient. The sequence is that of NADH-quinone oxidoreductase subunit D from Burkholderia lata (strain ATCC 17760 / DSM 23089 / LMG 22485 / NCIMB 9086 / R18194 / 383).